Here is a 150-residue protein sequence, read N- to C-terminus: uncharacterized protein (150 aa).

The interval 49–88 is disordered; the sequence is KEWAENASTDEIDDFLTHDDETERDADPSSGSGPELMNKA. Residues 63 to 75 are compositionally biased toward basic and acidic residues; that stretch reads FLTHDDETERDAD.

This is an uncharacterized protein from Bacillus subtilis (strain 168).